We begin with the raw amino-acid sequence, 359 residues long: D-alanine--D-alanine ligase (359 aa).

The ATP-grasp domain maps to 141–346 (KRIFKEAGLP…YSTLLDELIN (206 aa)). 172 to 227 (IEHLGYPCFVKPANLGSSVGITKVHNEEELPGALKLAAKYDRKLLIERGIDAREIE) serves as a coordination point for ATP. The Mg(2+) site is built by D299, E313, and N315.

The protein belongs to the D-alanine--D-alanine ligase family. Requires Mg(2+) as cofactor. It depends on Mn(2+) as a cofactor.

The protein resides in the cytoplasm. It catalyses the reaction 2 D-alanine + ATP = D-alanyl-D-alanine + ADP + phosphate + H(+). The protein operates within cell wall biogenesis; peptidoglycan biosynthesis. Functionally, cell wall formation. The polypeptide is D-alanine--D-alanine ligase (Thermoanaerobacter pseudethanolicus (strain ATCC 33223 / 39E) (Clostridium thermohydrosulfuricum)).